Here is a 178-residue protein sequence, read N- to C-terminus: Translation initiation factor IF-3 (178 aa).

It belongs to the IF-3 family. As to quaternary structure, monomer.

The protein localises to the cytoplasm. IF-3 binds to the 30S ribosomal subunit and shifts the equilibrium between 70S ribosomes and their 50S and 30S subunits in favor of the free subunits, thus enhancing the availability of 30S subunits on which protein synthesis initiation begins. In Macrococcus caseolyticus (strain JCSC5402) (Macrococcoides caseolyticum), this protein is Translation initiation factor IF-3.